The following is a 160-amino-acid chain: Putative pre-16S rRNA nuclease (160 aa).

This sequence belongs to the YqgF nuclease family.

It is found in the cytoplasm. Functionally, could be a nuclease involved in processing of the 5'-end of pre-16S rRNA. The protein is Putative pre-16S rRNA nuclease of Rhodopseudomonas palustris (strain ATCC BAA-98 / CGA009).